Here is a 274-residue protein sequence, read N- to C-terminus: MQSLHGNCLIAYARHKYILTMVNGEYRYFNGGDLVFADASQIRVDKCVENFVLVSRDTLSLFLPMLKEEALNLHAHKKISSLLVHHCSRDIPVFQEVAQLSQNKNLRYAEMLRKRALIFALLSVFLEDEHFIPLLLNVLQPNMRTRVCTVINNNIAHEWTLARIASELLMSPSLLKKKLREEETSYSQLLTECRMQRALQLIVIHGFSIKRVAVSCGYHSVSYFIYVFRNYYGMTPTEYQERSAQGLPNRDSAASIVAQGNFYGTNRSAEGIRL.

One can recognise an HTH araC/xylS-type domain in the interval 145 to 242 (TRVCTVINNN…GMTPTEYQER (98 aa)). 2 DNA-binding regions (H-T-H motif) span residues 162–183 (ARIA…REEE) and 209–232 (IKRV…RNYY).

Homodimer.

Functionally, positively regulates the expression of about fifteen genes involved in acid resistance such as gadA, gadB and gadC. Depending on the conditions (growth phase and medium), can repress gadW. This chain is HTH-type transcriptional regulator GadX (gadX), found in Shigella flexneri.